The following is a 376-amino-acid chain: Heterodimeric geranylgeranyl pyrophosphate synthase large subunit 2 (376 aa).

The signal sequence occupies residues Met-1–Leu-24. Isopentenyl diphosphate-binding residues include Lys-125, Arg-128, and His-157. Mg(2+)-binding residues include Asp-164 and Asp-170. Arg-175 is a binding site for dimethylallyl diphosphate. Arg-176 serves as a coordination point for isopentenyl diphosphate. Residues Lys-261, Thr-262, Gln-299, Lys-316, and Lys-326 each coordinate dimethylallyl diphosphate.

Belongs to the FPP/GGPP synthase family. In terms of assembly, monomer. Part of a heterodimeric geranyl(geranyl)diphosphate synthase. Interacts with GGR. Requires Mg(2+) as cofactor. Mainly expressed in flowers.

It localises to the endoplasmic reticulum. It carries out the reaction isopentenyl diphosphate + dimethylallyl diphosphate = (2E)-geranyl diphosphate + diphosphate. The enzyme catalyses isopentenyl diphosphate + (2E)-geranyl diphosphate = (2E,6E)-farnesyl diphosphate + diphosphate. The catalysed reaction is isopentenyl diphosphate + (2E,6E)-farnesyl diphosphate = (2E,6E,10E)-geranylgeranyl diphosphate + diphosphate. It participates in isoprenoid biosynthesis; farnesyl diphosphate biosynthesis; farnesyl diphosphate from geranyl diphosphate and isopentenyl diphosphate: step 1/1. It functions in the pathway isoprenoid biosynthesis; geranyl diphosphate biosynthesis; geranyl diphosphate from dimethylallyl diphosphate and isopentenyl diphosphate: step 1/1. The protein operates within isoprenoid biosynthesis; geranylgeranyl diphosphate biosynthesis; geranylgeranyl diphosphate from farnesyl diphosphate and isopentenyl diphosphate: step 1/1. Its function is as follows. Heterodimeric geranyl(geranyl)-diphosphate (GPP) synthase large subunit. In vitro, the large subunit catalyzes mainly the trans-addition of the three molecules of IPP onto DMAPP to form geranylgeranyl pyrophosphate while the small subunit alone is inactive. Upon association of the two subunits, the product profile is not changed. The protein is Heterodimeric geranylgeranyl pyrophosphate synthase large subunit 2 (GGPPS2) of Arabidopsis thaliana (Mouse-ear cress).